The primary structure comprises 364 residues: Phosphoserine aminotransferase (364 aa).

Arginine 42 is a binding site for L-glutamate. Pyridoxal 5'-phosphate is bound by residues 76–77 (AS), tryptophan 100, threonine 150, aspartate 169, and glutamine 192. Lysine 193 carries the post-translational modification N6-(pyridoxal phosphate)lysine. 234 to 235 (NT) provides a ligand contact to pyridoxal 5'-phosphate.

Belongs to the class-V pyridoxal-phosphate-dependent aminotransferase family. SerC subfamily. In terms of assembly, homodimer. The cofactor is pyridoxal 5'-phosphate.

It localises to the cytoplasm. The catalysed reaction is O-phospho-L-serine + 2-oxoglutarate = 3-phosphooxypyruvate + L-glutamate. The enzyme catalyses 4-(phosphooxy)-L-threonine + 2-oxoglutarate = (R)-3-hydroxy-2-oxo-4-phosphooxybutanoate + L-glutamate. The protein operates within amino-acid biosynthesis; L-serine biosynthesis; L-serine from 3-phospho-D-glycerate: step 2/3. Its function is as follows. Catalyzes the reversible conversion of 3-phosphohydroxypyruvate to phosphoserine and of 3-hydroxy-2-oxo-4-phosphonooxybutanoate to phosphohydroxythreonine. This is Phosphoserine aminotransferase from Shouchella clausii (strain KSM-K16) (Alkalihalobacillus clausii).